Here is a 495-residue protein sequence, read N- to C-terminus: Pre-glycoprotein polyprotein GP complex (495 aa).

A lipid anchor (N-myristoyl glycine; by host) is attached at Gly-2. The Extracellular portion of the chain corresponds to 2-17; sequence GQFISFMQEIPIFLQE. A helical membrane pass occupies residues 18–33; that stretch reads ALNIALVAVSLICIVK. Residues 34-58 are Cytoplasmic-facing; sequence GLVNLYRCGLFQLMVFLVLAGRSCS. Cys-57 contacts Zn(2+). At 59 to 434 the chain is on the extracellular side; that stretch reads EETFKIGMHT…QGRTPITLVD (376 aa). 4 disulfide bridges follow: Cys-92–Cys-236, Cys-281–Cys-294, Cys-303–Cys-312, and Cys-366–Cys-387. N-linked (GlcNAc...) asparagine; by host glycosylation is found at Asn-95 and Asn-188. N-linked (GlcNAc...) asparagine; by host glycosylation is found at Asn-367, Asn-375, Asn-392, and Asn-397. The chain crosses the membrane as a helical span at residues 435-455; sequence ICFWSTVFFTSTLFLHLIGFP. Residues 456–495 are Cytoplasmic-facing; that stretch reads THEHIRGEGCPLPHRLNSMGGCRCGKYLPLKKPTIWHRRH. Zn(2+)-binding residues include His-457, His-459, Cys-465, His-469, Cys-477, Cys-479, and His-495.

It belongs to the arenaviridae GPC protein family. Interacts with glycoprotein G2. Part of the GP complex (GP-C) together with glycoprotein G1 and glycoprotein G2. The GP-complex interacts with protein Z, which interacts with ribonucleocapsid; these interactions may induce virion budding. As to quaternary structure, homotrimer; disulfide-linked. In pre-fusion state, G1 homotrimers bind G2 homotrimers via ionic interactions. Part of the GP complex (GP-C) together with glycoprotein G2 and the stable signal peptide. The GP-complex interacts with protein Z, which interacts with ribonucleocapsid; these interactions may induce virion budding. In terms of assembly, homotrimer. Interacts with the stable signal peptide. In pre-fusion state, G2 homotrimers bind G1 homotrimers via ionic interactions. Part of the GP complex (GP-C) together with glycoprotein G1 and the stable signal peptide. Acidification in the endosome triggers rearrangements, which ultimately leads to a 6 helix bundle formed by the two heptad repeat domains (HR1 and HR2) in post-fusion state. The GP-complex interacts with protein Z, which interacts with ribonucleocapsid; these interactions may induce virion budding. Specific enzymatic cleavages in vivo yield mature proteins. GP-C polyprotein is cleaved in the endoplasmic reticulum by the host protease MBTPS1. Only cleaved glycoprotein is incorporated into virions. In terms of processing, the SSP remains stably associated with the GP complex following cleavage by signal peptidase and plays crucial roles in the trafficking of GP through the secretory pathway. Post-translationally, myristoylation is necessary for GP2-mediated fusion activity.

The protein resides in the virion membrane. It localises to the host endoplasmic reticulum membrane. The protein localises to the host Golgi apparatus membrane. Its subcellular location is the host cell membrane. In terms of biological role, functions as a cleaved signal peptide that is retained as the third component of the GP complex (GP-C). Helps to stabilize the spike complex in its native conformation. The SSP is required for efficient glycoprotein expression, post-translational maturation cleavage of G1 and G2, glycoprotein transport to the cell surface plasma membrane, formation of infectious virus particles, and acid pH-dependent glycoprotein-mediated cell fusion. Forms the virion spikes together with glycoprotein G2. The glycoprotein spike trimers are connected to the underlying matrix. Interacts with the host receptor leading to virus endocytosis. Its function is as follows. Forms the virion spikes together with glycoprotein G1. The glycoprotein spike trimers are connected to the underlying matrix. Class I viral fusion protein that directs fusion of viral and host endosomal membranes, leading to delivery of the nucleocapsid into the cytoplasm. Membrane fusion is mediated by irreversible conformational changes induced by acidification. The chain is Pre-glycoprotein polyprotein GP complex from Tacaribe virus (strain Franze-Fernandez) (TCRV).